Here is a 298-residue protein sequence, read N- to C-terminus: uncharacterized protein (298 aa).

Active-site charge relay system residues include threonine 43 and tyrosine 105. The active-site Proton donor is tyrosine 131. The active-site Schiff-base intermediate with substrate is lysine 159.

It belongs to the DapA family. In terms of assembly, homotetramer.

It localises to the cytoplasm. This is an uncharacterized protein from Pyrococcus furiosus (strain ATCC 43587 / DSM 3638 / JCM 8422 / Vc1).